Here is a 333-residue protein sequence, read N- to C-terminus: Flotillin-like protein FloA (333 aa).

Residues 9 to 29 form a helical membrane-spanning segment; it reads IVLIVGGIIFLILFFHYVPFF.

It belongs to the flotillin-like FloA family. In terms of assembly, homooligomerizes.

It is found in the cell membrane. The protein resides in the membrane raft. Functionally, found in functional membrane microdomains (FMM) that may be equivalent to eukaryotic membrane rafts. FMMs are highly dynamic and increase in number as cells age. Flotillins are thought to be important factors in membrane fluidity. In Bacteroides thetaiotaomicron (strain ATCC 29148 / DSM 2079 / JCM 5827 / CCUG 10774 / NCTC 10582 / VPI-5482 / E50), this protein is Flotillin-like protein FloA.